Here is a 327-residue protein sequence, read N- to C-terminus: COP9 signalosome complex subunit 7 (327 aa).

The PCI domain occupies 4 to 165 (VHHRALDALQ…NPPTVNVTSV (162 aa)). Disordered regions lie at residues 233–260 (GGEQ…AGWK) and 276–327 (GGSN…GKKS). The span at 236–255 (QLQGGNPGQGQGQGQGGLGK) shows a compositional bias: gly residues. Basic residues predominate over residues 315–327 (GARHSKRFLGKKS).

It belongs to the CSN7/EIF3M family. CSN7 subfamily. In terms of assembly, component of the COP9 signalosome (CSN) complex. In terms of tissue distribution, present in uninduced vegetative hyphae, induced conidiating cultures and in both conidiospores and ascospores.

The protein localises to the cytoplasm. Its subcellular location is the nucleus. Component of the COP9 signalosome (CSN) complex that acts as an regulator of the ubiquitin (Ubl) conjugation pathway by mediating the deneddylation of the cullin subunit of SCF-type E3 ubiquitin-protein ligase complexes. The CSN complex seems to link protein degradation to sexual development. May be required for sporulation only at elevated temperatures. This is COP9 signalosome complex subunit 7 (csnG) from Emericella nidulans (strain FGSC A4 / ATCC 38163 / CBS 112.46 / NRRL 194 / M139) (Aspergillus nidulans).